Here is a 483-residue protein sequence, read N- to C-terminus: Membrane-bound lytic murein transglycosylase F (483 aa).

The N-terminal stretch at 1 to 18 is a signal peptide; the sequence is MKGLIARFIAGFALLLWA. Residues 19 to 267 form a non-LT domain region; it reads WDMVFPWQQL…RIEEKYFNHL (249 aa). The segment at 269-483 is LT domain; sequence HFDYVDIQSY…SKESDSTLKE (215 aa). Glu312 is a catalytic residue. The segment at 458-483 is disordered; the sequence is QQIQNNEEQPSVPQEISKESDSTLKE. Basic and acidic residues predominate over residues 473 to 483; sequence ISKESDSTLKE.

The protein in the N-terminal section; belongs to the bacterial solute-binding protein 3 family. In the C-terminal section; belongs to the transglycosylase Slt family.

Its subcellular location is the cell outer membrane. The catalysed reaction is Exolytic cleavage of the (1-&gt;4)-beta-glycosidic linkage between N-acetylmuramic acid (MurNAc) and N-acetylglucosamine (GlcNAc) residues in peptidoglycan, from either the reducing or the non-reducing ends of the peptidoglycan chains, with concomitant formation of a 1,6-anhydrobond in the MurNAc residue.. In terms of biological role, murein-degrading enzyme that degrades murein glycan strands and insoluble, high-molecular weight murein sacculi, with the concomitant formation of a 1,6-anhydromuramoyl product. Lytic transglycosylases (LTs) play an integral role in the metabolism of the peptidoglycan (PG) sacculus. Their lytic action creates space within the PG sacculus to allow for its expansion as well as for the insertion of various structures such as secretion systems and flagella. The sequence is that of Membrane-bound lytic murein transglycosylase F from Actinobacillus pleuropneumoniae serotype 5b (strain L20).